We begin with the raw amino-acid sequence, 3619 residues long: BEACH domain-containing protein lvsA (3619 aa).

Disordered stretches follow at residues 1–117 (MFRR…NNNN), 648–709 (KIDD…EKEA), 1101–1129 (NNNN…NNDQ), 1367–1390 (SPNL…NSKK), 1636–1658 (IPTP…RKSI), 1893–1924 (SSIS…PTSG), and 1964–1999 (QQAA…NTPN). Over residues 17-30 (PQVPHSPGHPPHQP) the composition is skewed to pro residues. Composition is skewed to low complexity over residues 31-59 (PQQQ…QQPQ), 68-87 (SVSS…SFSS), 97-117 (EESS…NNNN), 656-689 (NNNN…NEEN), 1101-1127 (NNNN…NNNN), 1375-1387 (NNNN…GGSN), 1640-1652 (SSSS…SSTS), and 1893-1923 (SSIS…TPTS). One copy of the WD 1 repeat lies at 94–133 (SATEESSSINSNNNNNNNKNNNNNNNSNIIESNINVWTIM). Residues 1974-1986 (MSIQSSPFQSKNL) show a composition bias toward polar residues. Residues 2234–2258 (VKILEKLEADRVGLQKTVQSLYKSL) are a coiled coil. The stretch at 2294–2335 (LDSDFMNAFCYPLYKLVISDQHEHVDNSIKLWRLLLSLKTSS) is one WD 2 repeat. Disordered stretches follow at residues 2403–2457 (KKQH…ITKK) and 2596–2785 (NTSS…SEDE). The span at 2440-2452 (DRKDQSHQEEKSK) shows a compositional bias: basic and acidic residues. Residues 2596-2662 (NTSSITNNNN…TTTPQQSSSQ (67 aa)) show a composition bias toward low complexity. Composition is skewed to polar residues over residues 2663–2687 (IKVS…SSSE) and 2694–2725 (KLQS…SEEN). Low complexity-rich tracts occupy residues 2726–2735 (SSLTSASTTL) and 2742–2764 (TQTT…TTTT). In terms of domain architecture, BEACH-type PH spans 2807–2932 (KDPRLNGIMY…TRDEVYHTLV (126 aa)). Residues 2940 to 2971 (TIGGDAQGITGGQTGNDDNDDHHGGGGGRGVR) are disordered. The span at 2944-2953 (DAQGITGGQT) shows a compositional bias: gly residues. Over residues 2959–2971 (DDHHGGGGGRGVR) the composition is skewed to basic and acidic residues. The 299-residue stretch at 2972 to 3270 (DRFTSIWRKS…QLFDKPHPKR (299 aa)) folds into the BEACH domain. WD repeat units lie at residues 3347-3386 (HHDG…LAKR), 3389-3428 (GHTG…YVRS), 3431-3471 (AHEG…NYKT), 3474-3518 (IAND…LPDN), and 3563-3602 (SHST…QVKQ). Residues 3516 to 3539 (PDNNNSNNNNNNNNNNNNNATQIP) form a disordered region. The segment covering 3518-3534 (NNNSNNNNNNNNNNNNN) has biased composition (low complexity).

Its subcellular location is the contractile vacuole membrane. Functionally, involved in myosin-independent cytokinesis and early steps of phagocytosis. Also involved in contractile vacuole-mediated osmoregulation. This is BEACH domain-containing protein lvsA (lvsA) from Dictyostelium discoideum (Social amoeba).